Consider the following 1024-residue polypeptide: PH and SEC7 domain-containing protein 1 (1024 aa).

The segment at 67–96 (CTPLRAPPSPHIAPSPWGPSSPTGQPPPGA) is disordered. Pro residues predominate over residues 71 to 95 (RAPPSPHIAPSPWGPSSPTGQPPPG). A phosphoserine mark is found at Ser126 and Ser156. 4 disordered regions span residues 154 to 195 (STSD…LPNG), 250 to 277 (PSSG…VAVG), 307 to 401 (REEA…GPDS), and 434 to 536 (PTQS…LDST). Residues 348–365 (NEDDEAGGEEDVDDEVFE) are compositionally biased toward acidic residues. Positions 445–463 (PPQPPAPRPDPPAPAPLAP) are enriched in pro residues. Residues 495-507 (PRKELPSPSHSED) are compositionally biased toward basic and acidic residues. The SEC7 domain maps to 512 to 706 (GAAPLGSEPP…KALYSSIKNE (195 aa)). Ser720 carries the post-translational modification Phosphoserine. The region spanning 756–869 (AVYKHGALVR…WITRINVVAA (114 aa)) is the PH domain. Coiled-coil stretches lie at residues 898–924 (LSQE…HRAA) and 956–983 (AALL…AGST). The segment at 976 to 1024 (ALAQAGSTEDGCPPPHSSPSLRPKPTSQPRAQRPGSETRAGAGSTRPKP) is disordered.

Belongs to the PSD family. In terms of assembly, interacts with ACTN1. Interacts (ARF6-bound form) with KCNK1; does not interact with KCNK1 in the absence of ARF6. In terms of tissue distribution, highest expression detected in brain and some expression detected also in uterus, stomach, ovary and intestine, with isoform 2 being expressed at the highest levels. In the brain, isoform 1 is highly expressed in the strata oriens, radiatum, lacunosum-moleculare of the hippocampal CA1-3 regions and the dentate molecular layer of the hippocampal formation, with lower levels detected in the neuronal cell layers and the stratum lucidum (at protein level). Not detected in tongue, thymus, spleen, lung, heart, liver and kidney.

It is found in the cell membrane. The protein resides in the cell projection. It localises to the ruffle. Its subcellular location is the ruffle membrane. The protein localises to the cleavage furrow. Its function is as follows. Guanine nucleotide exchange factor for ARF6. Isoform 2 and isoform 3 induce cytoskeletal remodeling, but lead to distinct morphological changes in HeLa cells: isoform 2 induces cell elongation and formation of actin-rich protrusions, whereas isoform 3 promotes the formation of membrane ruffles and loss of stress fibers. The chain is PH and SEC7 domain-containing protein 1 (Psd) from Mus musculus (Mouse).